Here is a 114-residue protein sequence, read N- to C-terminus: Fructose-bisphosphate aldolase 2 (114 aa).

35-38 is a dihydroxyacetone phosphate binding site; it reads NIDT.

This sequence belongs to the class II fructose-bisphosphate aldolase family. In terms of assembly, homodimer. Zn(2+) is required as a cofactor.

The enzyme catalyses beta-D-fructose 1,6-bisphosphate = D-glyceraldehyde 3-phosphate + dihydroxyacetone phosphate. Its pathway is carbohydrate biosynthesis; Calvin cycle. It functions in the pathway carbohydrate degradation; glycolysis; D-glyceraldehyde 3-phosphate and glycerone phosphate from D-glucose: step 4/4. Functionally, catalyzes the aldol condensation of dihydroxyacetone phosphate (DHAP or glycerone-phosphate) with glyceraldehyde 3-phosphate (G3P) to form fructose 1,6-bisphosphate (FBP) in gluconeogenesis and the reverse reaction in glycolysis. The protein is Fructose-bisphosphate aldolase 2 (cbbA) of Rhodobacter capsulatus (Rhodopseudomonas capsulata).